The following is a 671-amino-acid chain: Putative glycoside hydrolase BT_3595 (671 aa).

Positions 1–24 (MITGIISILCYLQCFGTLSASVTA) are cleaved as a signal peptide.

It belongs to the glycoside hydrolase-like 3 (GHL3) family.

This chain is Putative glycoside hydrolase BT_3595, found in Bacteroides thetaiotaomicron (strain ATCC 29148 / DSM 2079 / JCM 5827 / CCUG 10774 / NCTC 10582 / VPI-5482 / E50).